Reading from the N-terminus, the 214-residue chain is MQLFHLCLIISCTCPTVQASKLCLGWLWGMDIDPYKEFGATVELLSFLPSDFFPSVRDLLDTASALYREALESPEHCSPHHTALRQAILCWGELMTLATWVGNNLEDPASRDLVVNYVNTNMGLKIRQLLWFRISYLTFGRETVLEYLVSFGVWIRTPPAYRPPNAPILSTLPETTVVRRRDRGRSPRRRTPSPRRRRSQSPRRRRSQSRESQC.

The N-terminal stretch at methionine 1–alanine 19 is a signal peptide. The tract at residues glycine 25–leucine 27 is HBEAG. The segment at asparagine 165–cysteine 214 is disordered. The span at valine 178–serine 207 shows a compositional bias: basic residues. The 1; half-length repeat unit spans residues serine 186–proline 192. The segment at serine 186 to glutamine 208 is 3 X 8 AA repeats of S-P-R-R-R-R-S-Q. A propeptide spanning residues serine 186–cysteine 214 is cleaved from the precursor. 2 consecutive repeat copies span residues serine 193 to glutamine 200 and serine 201 to glutamine 208.

This sequence belongs to the orthohepadnavirus precore antigen family. As to quaternary structure, homodimerizes. Phosphorylated. In terms of processing, cleaved by host furin.

It is found in the secreted. It localises to the host nucleus. Its function is as follows. May regulate immune response to the intracellular capsid in acting as a T-cell tolerogen, by having an immunoregulatory effect which prevents destruction of infected cells by cytotoxic T-cells. This immune regulation may predispose to chronicity during perinatal infections and prevent severe liver injury during adult infections. This is External core antigen from Hepatitis B virus genotype A2 subtype adw2 (isolate Germany/991/1990) (HBV-A).